A 295-amino-acid polypeptide reads, in one-letter code: MKPTYCGYAAIIGRPNVGKSTLLNQLLEQKISITSRKPQTTRYQILGVKTFKDIQVIYVDTPGLHAGTERTINRYMNRTARGALRDVDAIVFVIEPHWESQDAWVLDNLKEIETPVFLVINKVDKIKNRAELLPLIEKVSSLYAFQKITPLSAKTGDQVGTLEQAVHQLMPESPFYFPPEQVTDRSDQFMASEIIREKLMRLLGQEIPYSLAVTLIEFRKEEKIIRISAVIWVEKKSQKGIVIGKGGERLKRVGTNARLDMEKWFGKRVFLQLWVKVKSGWADNERLLRELGFEE.

Positions 5–172 (YCGYAAIIGR…EQAVHQLMPE (168 aa)) constitute an Era-type G domain. The G1 stretch occupies residues 13 to 20 (GRPNVGKS). 13–20 (GRPNVGKS) contacts GTP. A G2 region spans residues 39-43 (QTTRY). The segment at 60–63 (DTPG) is G3. Residues 60–64 (DTPGL) and 121–124 (NKVD) each bind GTP. A G4 region spans residues 121–124 (NKVD). The interval 151-153 (LSA) is G5. Positions 203–279 (LGQEIPYSLA…FLQLWVKVKS (77 aa)) constitute a KH type-2 domain.

Belongs to the TRAFAC class TrmE-Era-EngA-EngB-Septin-like GTPase superfamily. Era GTPase family. In terms of assembly, monomer.

It is found in the cytoplasm. It localises to the cell inner membrane. Functionally, an essential GTPase that binds both GDP and GTP, with rapid nucleotide exchange. Plays a role in 16S rRNA processing and 30S ribosomal subunit biogenesis and possibly also in cell cycle regulation and energy metabolism. This Coxiella burnetii (strain RSA 331 / Henzerling II) protein is GTPase Era.